Reading from the N-terminus, the 464-residue chain is Chitobiosyldiphosphodolichol beta-mannosyltransferase (464 aa).

The Lumenal portion of the chain corresponds to 1-2; that stretch reads MA. Residues 3 to 23 traverse the membrane as a helical segment; sequence ASCLVLLALCLLLPLLLLGGW. The Cytoplasmic segment spans residues 24–99; it reads KRWRRGRTAR…ELQSLAVGPR (76 aa). The segment at residues 100–120 is an intramembrane region (helical); the sequence is VFQYGVKVVFQAMYLLWKLMW. The Cytoplasmic segment spans residues 121–464; it reads REPGAYIFLQ…QTVLPLVMDT (344 aa). At Ser242 the chain carries Phosphoserine. Positions 242-261 are disordered; the sequence is SPFRARSEPEDPATERSAFT.

It belongs to the glycosyltransferase group 1 family. Glycosyltransferase 33 subfamily.

Its subcellular location is the endoplasmic reticulum membrane. The enzyme catalyses an N,N'-diacetylchitobiosyl-diphospho-di-trans,poly-cis-dolichol + GDP-alpha-D-mannose = a beta-D-Man-(1-&gt;4)-beta-D-GlcNAc-(1-&gt;4)-alpha-D-GlcNAc-diphospho-di-trans,poly-cis-dolichol + GDP + H(+). Its pathway is protein modification; protein glycosylation. Mannosyltransferase that operates in the biosynthetic pathway of dolichol-linked oligosaccharides, the glycan precursors employed in protein asparagine (N)-glycosylation. The assembly of dolichol-linked oligosaccharides begins on the cytosolic side of the endoplasmic reticulum membrane and finishes in its lumen. The sequential addition of sugars to dolichol pyrophosphate produces dolichol-linked oligosaccharides containing fourteen sugars, including two GlcNAcs, nine mannoses and three glucoses. Once assembled, the oligosaccharide is transferred from the lipid to nascent proteins by oligosaccharyltransferases. Catalyzes, on the cytoplasmic face of the endoplasmic reticulum, the addition of the first mannose residues to the dolichol-linked oligosaccharide chain, to produce Man1GlcNAc(2)-PP-dolichol core oligosaccharide. Man1GlcNAc(2)-PP-dolichol is a substrate for ALG2, the following enzyme in the biosynthetic pathway. The protein is Chitobiosyldiphosphodolichol beta-mannosyltransferase of Pongo abelii (Sumatran orangutan).